We begin with the raw amino-acid sequence, 937 residues long: MORC family CW-type zinc finger protein 4 (937 aa).

The CW-type zinc finger occupies 420–472 (KVPDQTWVQCDECLKWRKLPGKIDPSMLPARWFCYYNSHPKYRRCSVPEEQEL). 4 residues coordinate Zn(2+): Cys-429, Cys-432, Cys-453, and Cys-464. The disordered stretch occupies residues 606-637 (PEGENSHDKSSSERSTPPYLFPEYPEASKNTG). Residues 762–876 (KLKNQRELEE…LEMLQKAQVS (115 aa)) adopt a coiled-coil conformation.

In terms of tissue distribution, expressed at low levels in normal tissues, with highest expression levels in placenta and testis. Expression is significantly increased in subset of diffuse large B-cell lymphomas.

The protein localises to the nucleus. Functionally, histone methylation reader which binds to non-methylated (H3K4me0), monomethylated (H3K4me1), dimethylated (H3K4me2) and trimethylated (H3K4me3) 'Lys-4' on histone H3. The order of binding preference is H3K4me3 &gt; H3K4me2 &gt; H3K4me1 &gt; H3K4me0. This Homo sapiens (Human) protein is MORC family CW-type zinc finger protein 4 (MORC4).